The sequence spans 199 residues: uncharacterized protein (199 aa).

The first 23 residues, 1–23 (MSARAPKELRLALPPCLLNRTFA), serve as a signal peptide directing secretion. N-linked (GlcNAc...) asparagine glycosylation is found at N19 and N26. Over 24-60 (SHNASGGSSAGLRSSGAGGGTCITQVGQQLFQSFSST) the chain is Extracellular. A helical membrane pass occupies residues 61 to 81 (LVLIVLVTLIFCLLVLSLSTF). Residues 82–199 (HIHKRRMKKR…EGLLQTVVLS (118 aa)) are Cytoplasmic-facing. A disordered region spans residues 93-190 (MQRAQEEYER…ASSCLDTPGE (98 aa)). Composition is skewed to basic and acidic residues over residues 95 to 106 (RAQEEYERDHCS) and 124 to 135 (HGKETRLERQPR). Residues 147–163 (SSSSSSSSSPGLLCQGP) are compositionally biased toward low complexity. The span at 164–176 (CAPPPPLPAPTPQ) shows a compositional bias: pro residues.

It localises to the membrane. This is an uncharacterized protein from Mus musculus (Mouse).